We begin with the raw amino-acid sequence, 89 residues long: Small ribosomal subunit protein uS15 (89 aa).

This sequence belongs to the universal ribosomal protein uS15 family. In terms of assembly, part of the 30S ribosomal subunit. Forms a bridge to the 50S subunit in the 70S ribosome, contacting the 23S rRNA.

Functionally, one of the primary rRNA binding proteins, it binds directly to 16S rRNA where it helps nucleate assembly of the platform of the 30S subunit by binding and bridging several RNA helices of the 16S rRNA. In terms of biological role, forms an intersubunit bridge (bridge B4) with the 23S rRNA of the 50S subunit in the ribosome. The sequence is that of Small ribosomal subunit protein uS15 from Acidothermus cellulolyticus (strain ATCC 43068 / DSM 8971 / 11B).